The chain runs to 463 residues: Glutamate--tRNA ligase (463 aa).

The 'HIGH' region motif lies at 9-19; that stretch reads PSPTGYLHVGG. A compositionally biased stretch (basic and acidic residues) spans 115–129; sequence AGEKPRYDGTWRPEA. The tract at residues 115 to 136 is disordered; the sequence is AGEKPRYDGTWRPEAGKTLPAI. The 'KMSKS' region motif lies at 241-245; the sequence is KLSKR. ATP is bound at residue Lys244.

The protein belongs to the class-I aminoacyl-tRNA synthetase family. Glutamate--tRNA ligase type 1 subfamily. As to quaternary structure, monomer.

The protein localises to the cytoplasm. The catalysed reaction is tRNA(Glu) + L-glutamate + ATP = L-glutamyl-tRNA(Glu) + AMP + diphosphate. Functionally, catalyzes the attachment of glutamate to tRNA(Glu) in a two-step reaction: glutamate is first activated by ATP to form Glu-AMP and then transferred to the acceptor end of tRNA(Glu). In Janthinobacterium sp. (strain Marseille) (Minibacterium massiliensis), this protein is Glutamate--tRNA ligase.